Consider the following 497-residue polypeptide: Glutamate--tRNA ligase (497 aa).

Positions 13–23 (PSPTGTPHVGM) match the 'HIGH' region motif. The short motif at 257–261 (KLSKR) is the 'KMSKS' region element. An ATP-binding site is contributed by Lys-260.

The protein belongs to the class-I aminoacyl-tRNA synthetase family. Glutamate--tRNA ligase type 1 subfamily. As to quaternary structure, monomer.

The protein localises to the cytoplasm. The catalysed reaction is tRNA(Glu) + L-glutamate + ATP = L-glutamyl-tRNA(Glu) + AMP + diphosphate. Functionally, catalyzes the attachment of glutamate to tRNA(Glu) in a two-step reaction: glutamate is first activated by ATP to form Glu-AMP and then transferred to the acceptor end of tRNA(Glu). The chain is Glutamate--tRNA ligase from Corynebacterium diphtheriae (strain ATCC 700971 / NCTC 13129 / Biotype gravis).